The following is a 255-amino-acid chain: Type III pantothenate kinase (255 aa).

Position 6–13 (6–13) interacts with ATP; sequence DIGNTNIV. 107–110 lines the substrate pocket; the sequence is GSDC. Catalysis depends on aspartate 109, which acts as the Proton acceptor. Aspartate 129 provides a ligand contact to K(+). Threonine 132 contacts ATP. Position 184 (threonine 184) interacts with substrate.

Belongs to the type III pantothenate kinase family. As to quaternary structure, homodimer. It depends on NH4(+) as a cofactor. K(+) is required as a cofactor.

Its subcellular location is the cytoplasm. It catalyses the reaction (R)-pantothenate + ATP = (R)-4'-phosphopantothenate + ADP + H(+). It participates in cofactor biosynthesis; coenzyme A biosynthesis; CoA from (R)-pantothenate: step 1/5. Catalyzes the phosphorylation of pantothenate (Pan), the first step in CoA biosynthesis. The sequence is that of Type III pantothenate kinase from Bifidobacterium longum subsp. infantis (strain ATCC 15697 / DSM 20088 / JCM 1222 / NCTC 11817 / S12).